Here is a 418-residue protein sequence, read N- to C-terminus: Glutamyl-tRNA reductase (418 aa).

Substrate contacts are provided by residues 49 to 52 (TCNR), serine 109, 114 to 116 (EPQ), and glutamine 120. Cysteine 50 serves as the catalytic Nucleophile. Residue 189 to 194 (GAGETI) participates in NADP(+) binding.

Belongs to the glutamyl-tRNA reductase family. In terms of assembly, homodimer.

It catalyses the reaction (S)-4-amino-5-oxopentanoate + tRNA(Glu) + NADP(+) = L-glutamyl-tRNA(Glu) + NADPH + H(+). Its pathway is porphyrin-containing compound metabolism; protoporphyrin-IX biosynthesis; 5-aminolevulinate from L-glutamyl-tRNA(Glu): step 1/2. Catalyzes the NADPH-dependent reduction of glutamyl-tRNA(Glu) to glutamate 1-semialdehyde (GSA). The protein is Glutamyl-tRNA reductase of Escherichia fergusonii (strain ATCC 35469 / DSM 13698 / CCUG 18766 / IAM 14443 / JCM 21226 / LMG 7866 / NBRC 102419 / NCTC 12128 / CDC 0568-73).